Reading from the N-terminus, the 382-residue chain is Nitric oxide reductase FlRd-NAD(+) reductase (382 aa).

Belongs to the FAD-dependent oxidoreductase family. It depends on FAD as a cofactor.

The protein resides in the cytoplasm. It catalyses the reaction 2 reduced [nitric oxide reductase rubredoxin domain] + NAD(+) + H(+) = 2 oxidized [nitric oxide reductase rubredoxin domain] + NADH. The protein operates within nitrogen metabolism; nitric oxide reduction. In terms of biological role, one of at least two accessory proteins for anaerobic nitric oxide (NO) reductase. Reduces the rubredoxin moiety of NO reductase. The sequence is that of Nitric oxide reductase FlRd-NAD(+) reductase from Vibrio vulnificus (strain YJ016).